The sequence spans 817 residues: TPR repeat-containing protein C19B12.01 (817 aa).

Disordered stretches follow at residues 276 to 298 (DQKS…PNHP) and 386 to 413 (GKSP…DGEN). TPR repeat units follow at residues 459–492 (LQMW…DPYD), 521–554 (APAQ…NPLS), 555–588 (YPTW…NPED), and 625–658 (WRIW…KGKD).

This Schizosaccharomyces pombe (strain 972 / ATCC 24843) (Fission yeast) protein is TPR repeat-containing protein C19B12.01.